The primary structure comprises 328 residues: Mitochondrial GTPase 1 (328 aa).

Positions 23–211 (NKTLKRLKNL…MLDTPGIMTP (189 aa)) constitute a CP-type G domain. Residues 70–73 (NKCD), 155–160 (NTGKSS), and G207 contribute to the GTP site.

This sequence belongs to the TRAFAC class YlqF/YawG GTPase family. MTG1 subfamily.

Its subcellular location is the mitochondrion inner membrane. In terms of biological role, mitochondrial GTPase involved in assembly of the large ribosomal subunit. Plays a role in expression of the mitochondrial translational machinery. The protein is Mitochondrial GTPase 1 (mtg1) of Schizosaccharomyces pombe (strain 972 / ATCC 24843) (Fission yeast).